A 509-amino-acid chain; its full sequence is Histidine ammonia-lyase (509 aa).

Positions 142–144 form a cross-link, 5-imidazolinone (Ala-Gly); that stretch reads ASG. Ser-143 carries the post-translational modification 2,3-didehydroalanine (Ser).

The protein belongs to the PAL/histidase family. In terms of processing, contains an active site 4-methylidene-imidazol-5-one (MIO), which is formed autocatalytically by cyclization and dehydration of residues Ala-Ser-Gly.

The protein localises to the cytoplasm. It carries out the reaction L-histidine = trans-urocanate + NH4(+). It participates in amino-acid degradation; L-histidine degradation into L-glutamate; N-formimidoyl-L-glutamate from L-histidine: step 1/3. The polypeptide is Histidine ammonia-lyase (Pseudomonas aeruginosa (strain LESB58)).